A 610-amino-acid polypeptide reads, in one-letter code: Aspartate--tRNA(Asp/Asn) ligase (610 aa).

Position 177 (Glu177) interacts with L-aspartate. The interval 201 to 204 (QLFK) is aspartate. L-aspartate is bound at residue Arg223. ATP contacts are provided by residues 223–225 (RDE) and Gln232. His461 contributes to the L-aspartate binding site. Residue Glu499 coordinates ATP. Residue Arg506 participates in L-aspartate binding. 551 to 554 (GVDR) is a binding site for ATP.

It belongs to the class-II aminoacyl-tRNA synthetase family. Type 1 subfamily. In terms of assembly, homodimer.

The protein resides in the cytoplasm. It carries out the reaction tRNA(Asx) + L-aspartate + ATP = L-aspartyl-tRNA(Asx) + AMP + diphosphate. Its function is as follows. Aspartyl-tRNA synthetase with relaxed tRNA specificity since it is able to aspartylate not only its cognate tRNA(Asp) but also tRNA(Asn). Reaction proceeds in two steps: L-aspartate is first activated by ATP to form Asp-AMP and then transferred to the acceptor end of tRNA(Asp/Asn). The chain is Aspartate--tRNA(Asp/Asn) ligase from Parasynechococcus marenigrum (strain WH8102).